The following is a 257-amino-acid chain: UPF0246 protein YaaA (257 aa).

This sequence belongs to the UPF0246 family.

The chain is UPF0246 protein YaaA from Salmonella typhi.